Reading from the N-terminus, the 390-residue chain is Transforming protein cbl (390 aa).

Residues 1–52 (ASAGGGCRRGPSFSPGSIPSLAAERAPDPPLAMAGNVKKSSGAGGGGSGGSG) form a disordered region. Gly residues predominate over residues 42-52 (GAGGGGSGGSG). Positions 77–205 (PPCTVDKKMV…KGIFPSGLFQ (129 aa)) are 4H. The Cbl-PTB domain occupies 77-381 (PPCTVDKKMV…GRNQNPDLTG (305 aa)). The segment at 206 to 278 (GDTFRITKAD…FEFDIFTRLF (73 aa)) is EF-hand-like. Residues Asp-259, Thr-261, Asn-263, Tyr-265, and Glu-270 each contribute to the Ca(2+) site. The segment at 279–381 (QPWSSLLRNW…GRNQNPDLTG (103 aa)) is SH2-like. Residue Arg-324 participates in 4-O-phospho-L-tyrosine binding.

Functionally, induces early B-lineage lymphomas. The chain is Transforming protein cbl (V-CBL) from Mus musculus (Mouse).